A 614-amino-acid chain; its full sequence is MRLLLIHSDYIEYEAKKKTKMAEEGAVLSDREEDALTVFTAVESVDEEDTEGVILQAIEEVKKTAGQVHAEKIVIYPYAHLSSDLARPELAVPALNALRDGLAAEGFAVKRAPFGWYKSFKISCKGHPLSELSKTIVPGEEGEVVSKKLGKKEATHDWFVMTPDGKTHDYHKYLDNTPFGCLVKKELGVAEPTGGEPAHVDLMRSKELVDYEPASDVGCMRWMPKGKLIRDLMADYVLALLLPYGATPVETPVMYDLGDKAIYEHADKFGERQYRFKSNNRDMMLRFAACFGMFSIMRDMHISKNTLPMKMYELSTYSFRHEQKGEVIGLKRLRCFTMPDMHSLCTDMPEAMKCFEEQLAIGWQTGRDFETKLVAAFRCTKKFYDENEAWVKKIVKESDCPMLIEILSERVHYWEAKIDLAAIDGQNRPIENPTVQIDVESSTRFNIKYFKDDGTPVYPPILHCSPTGSVERVICAILENISTQKVPALPTWLSPVQARVVPVAERHTAYAQEICDALNAQGIRCDLDERDESVGKKVREAGMDWVPYVIVIGDEEMASKKLTVTIRRKSEPNKPFKEQMTTDALAATIKNETAGKPFRPLYTPRKLSLKARYI.

An editing domain region spans residues 1–141; sequence MRLLLIHSDY…LSKTIVPGEE (141 aa). The segment at 198–490 is catalytic; the sequence is AHVDLMRSKE…ISTQKVPALP (293 aa). Positions 290, 342, and 463 each coordinate Zn(2+).

It belongs to the class-II aminoacyl-tRNA synthetase family. In terms of assembly, homodimer. Zn(2+) is required as a cofactor.

The protein resides in the cytoplasm. It carries out the reaction tRNA(Thr) + L-threonine + ATP = L-threonyl-tRNA(Thr) + AMP + diphosphate + H(+). In terms of biological role, catalyzes the attachment of threonine to tRNA(Thr) in a two-step reaction: L-threonine is first activated by ATP to form Thr-AMP and then transferred to the acceptor end of tRNA(Thr). Also edits incorrectly charged L-seryl-tRNA(Thr). The sequence is that of Threonine--tRNA ligase from Methanoregula boonei (strain DSM 21154 / JCM 14090 / 6A8).